Reading from the N-terminus, the 213-residue chain is ATP phosphoribosyltransferase (213 aa).

The protein belongs to the ATP phosphoribosyltransferase family. Short subfamily. Heteromultimer composed of HisG and HisZ subunits.

It localises to the cytoplasm. It catalyses the reaction 1-(5-phospho-beta-D-ribosyl)-ATP + diphosphate = 5-phospho-alpha-D-ribose 1-diphosphate + ATP. It functions in the pathway amino-acid biosynthesis; L-histidine biosynthesis; L-histidine from 5-phospho-alpha-D-ribose 1-diphosphate: step 1/9. In terms of biological role, catalyzes the condensation of ATP and 5-phosphoribose 1-diphosphate to form N'-(5'-phosphoribosyl)-ATP (PR-ATP). Has a crucial role in the pathway because the rate of histidine biosynthesis seems to be controlled primarily by regulation of HisG enzymatic activity. This chain is ATP phosphoribosyltransferase, found in Listeria monocytogenes serotype 4b (strain F2365).